The following is a 360-amino-acid chain: Catabolic L-serine/threonine dehydratase (360 aa).

S2 carries the N-acetylserine modification. The residue at position 37 (K37) is an N6-(pyridoxal phosphate)lysine.

This sequence belongs to the serine/threonine dehydratase family. Requires pyridoxal 5'-phosphate as cofactor.

It localises to the mitochondrion. The catalysed reaction is L-serine = pyruvate + NH4(+). The enzyme catalyses L-threonine = 2-oxobutanoate + NH4(+). The protein is Catabolic L-serine/threonine dehydratase (CHA1) of Saccharomyces cerevisiae (strain ATCC 204508 / S288c) (Baker's yeast).